The sequence spans 147 residues: Large-conductance mechanosensitive channel (147 aa).

2 helical membrane-spanning segments follow: residues 8–28 (FIMKGNVLDLAVGVIIGAAFG) and 81–101 (GIFLNTTLDFLIMALVIFMII).

The protein belongs to the MscL family. In terms of assembly, homopentamer.

It is found in the cell inner membrane. Functionally, channel that opens in response to stretch forces in the membrane lipid bilayer. May participate in the regulation of osmotic pressure changes within the cell. The chain is Large-conductance mechanosensitive channel from Trichlorobacter lovleyi (strain ATCC BAA-1151 / DSM 17278 / SZ) (Geobacter lovleyi).